The primary structure comprises 148 residues: Large ribosomal subunit protein bL9 (148 aa).

It belongs to the bacterial ribosomal protein bL9 family.

In terms of biological role, binds to the 23S rRNA. The polypeptide is Large ribosomal subunit protein bL9 (Ectopseudomonas mendocina (strain ymp) (Pseudomonas mendocina)).